The chain runs to 418 residues: Tyrosine--tRNA ligase (418 aa).

Tyrosine 34 contacts L-tyrosine. The 'HIGH' region motif lies at 39-48; that stretch reads PTADSLHLGH. Tyrosine 169 and glutamine 173 together coordinate L-tyrosine. Residues 229–233 carry the 'KMSKS' region motif; sequence KFGKS. Lysine 232 serves as a coordination point for ATP. The S4 RNA-binding domain maps to 352-418; it reads LNIVDMLVTA…GKKKYAVLTY (67 aa).

Belongs to the class-I aminoacyl-tRNA synthetase family. TyrS type 1 subfamily. As to quaternary structure, homodimer.

The protein localises to the cytoplasm. It carries out the reaction tRNA(Tyr) + L-tyrosine + ATP = L-tyrosyl-tRNA(Tyr) + AMP + diphosphate + H(+). Catalyzes the attachment of tyrosine to tRNA(Tyr) in a two-step reaction: tyrosine is first activated by ATP to form Tyr-AMP and then transferred to the acceptor end of tRNA(Tyr). The polypeptide is Tyrosine--tRNA ligase (Streptococcus equi subsp. zooepidemicus (strain MGCS10565)).